A 365-amino-acid chain; its full sequence is Histidine biosynthesis bifunctional protein HisB (365 aa).

Positions 1–176 (MTQQPTLFID…VADPKGLGQP (176 aa)) are histidinol-phosphatase. The active-site Nucleophile is D10. The Mg(2+) site is built by D10 and D12. The active-site Proton donor is the D12. Zn(2+)-binding residues include C93, H95, C101, and C103. Mg(2+) is bound at residue D130. An imidazoleglycerol-phosphate dehydratase region spans residues 177-365 (RHAVVARKTK…NEMPSSKGVL (189 aa)).

In the N-terminal section; belongs to the histidinol-phosphatase family. This sequence in the C-terminal section; belongs to the imidazoleglycerol-phosphate dehydratase family. The cofactor is Mg(2+). Zn(2+) serves as cofactor.

The protein resides in the cytoplasm. The catalysed reaction is D-erythro-1-(imidazol-4-yl)glycerol 3-phosphate = 3-(imidazol-4-yl)-2-oxopropyl phosphate + H2O. It carries out the reaction L-histidinol phosphate + H2O = L-histidinol + phosphate. Its pathway is amino-acid biosynthesis; L-histidine biosynthesis; L-histidine from 5-phospho-alpha-D-ribose 1-diphosphate: step 6/9. It participates in amino-acid biosynthesis; L-histidine biosynthesis; L-histidine from 5-phospho-alpha-D-ribose 1-diphosphate: step 8/9. The chain is Histidine biosynthesis bifunctional protein HisB from Mannheimia succiniciproducens (strain KCTC 0769BP / MBEL55E).